Here is a 388-residue protein sequence, read N- to C-terminus: Gastricsin (388 aa).

The signal sequence occupies residues 1 to 16 (MKWMVVAFICLQLLEA). Residues 17–59 (TVVKVPLKKFKSIRETMKEKGLLWEFLKTHKHDPARKYRVSDL) constitute a propeptide, activation peptide. Positions 73 to 385 (YFGEISIGTP…DLGNNRVGFA (313 aa)) constitute a Peptidase A1 domain. Residue Asp91 is part of the active site. 2 disulfide bridges follow: Cys104–Cys109 and Cys267–Cys271. Asp276 is an active-site residue. Residues Cys310 and Cys343 are joined by a disulfide bond.

This sequence belongs to the peptidase A1 family.

The protein localises to the secreted. The enzyme catalyses More restricted specificity than pepsin A, but shows preferential cleavage at Tyr-|-Xaa bonds. High activity on hemoglobin.. Its activity is regulated as follows. Inhibited by pepstatin. Functionally, hydrolyzes a variety of proteins. This chain is Gastricsin (PGC), found in Callithrix jacchus (White-tufted-ear marmoset).